We begin with the raw amino-acid sequence, 80 residues long: Pigment-dispersing hormone type 2 (80 aa).

The signal sequence occupies residues 1-23 (MARCFVVLAFLALAAMSLQVATA). The residue at position 77 (alanine 77) is an Alanine amide.

The protein belongs to the arthropod PDH family. As to expression, eyestalk.

It is found in the secreted. In terms of biological role, the pigment-dispersing hormone causes the migration of the distal retinal pigment into the proximal end of the pigment chromatophore cells and thus decreases the amount of light entering the retinulas. May also function as a neurotransmitter and/or neuromodulator. The polypeptide is Pigment-dispersing hormone type 2 (PDH2) (Penaeus vannamei (Whiteleg shrimp)).